A 249-amino-acid polypeptide reads, in one-letter code: Aspartate/glutamate leucyltransferase (249 aa).

This sequence belongs to the R-transferase family. Bpt subfamily.

It is found in the cytoplasm. It catalyses the reaction N-terminal L-glutamyl-[protein] + L-leucyl-tRNA(Leu) = N-terminal L-leucyl-L-glutamyl-[protein] + tRNA(Leu) + H(+). It carries out the reaction N-terminal L-aspartyl-[protein] + L-leucyl-tRNA(Leu) = N-terminal L-leucyl-L-aspartyl-[protein] + tRNA(Leu) + H(+). Functionally, functions in the N-end rule pathway of protein degradation where it conjugates Leu from its aminoacyl-tRNA to the N-termini of proteins containing an N-terminal aspartate or glutamate. This is Aspartate/glutamate leucyltransferase from Brucella anthropi (strain ATCC 49188 / DSM 6882 / CCUG 24695 / JCM 21032 / LMG 3331 / NBRC 15819 / NCTC 12168 / Alc 37) (Ochrobactrum anthropi).